The chain runs to 53 residues: Large ribosomal subunit protein bL32c (53 aa).

This sequence belongs to the bacterial ribosomal protein bL32 family.

It is found in the plastid. The protein localises to the chloroplast. This chain is Large ribosomal subunit protein bL32c (rpl32), found in Guillardia theta (Cryptophyte).